A 412-amino-acid polypeptide reads, in one-letter code: Sterol-4-alpha-carboxylate 3-dehydrogenase erg26, decarboxylating (412 aa).

NADP(+) contacts are provided by residues 17 to 23 (GGCGFLG), 89 to 90 (DI), and 111 to 113 (TAT). Substrate contacts are provided by Ser-158 and Tyr-188. Residues Tyr-188, Lys-192, and 217-220 (PAGI) contribute to the NADP(+) site. The Proton donor role is filled by Lys-192.

The protein belongs to the 3-beta-HSD family. As to quaternary structure, heterotetramer of erg25, erg26, erg27 and erg28. Erg28 acts as a scaffold to tether erg27 and other 4,4-demethylation-related enzymes, forming a demethylation enzyme complex, in the endoplasmic reticulum.

It is found in the endoplasmic reticulum membrane. Its pathway is steroid metabolism; ergosterol biosynthesis. Functionally, sterol-C4-methyl oxidase; part of the third module of ergosterol biosynthesis pathway that includes the late steps of the pathway. Erg26 is a catalytic component of the C-4 demethylation complex that catalyzes the conversion of 4,4-dimethylfecosterol into fecosterol via 4-methylfecosterol. The third module or late pathway involves the ergosterol synthesis itself through consecutive reactions that mainly occur in the endoplasmic reticulum (ER) membrane. Firstly, the squalene synthase erg9 catalyzes the condensation of 2 farnesyl pyrophosphate moieties to form squalene, which is the precursor of all steroids. Squalene synthase is crucial for balancing the incorporation of farnesyl diphosphate (FPP) into sterol and nonsterol isoprene synthesis. Secondly, squalene is converted into lanosterol by the consecutive action of the squalene epoxidase erg1 and the lanosterol synthase erg7. Then, the delta(24)-sterol C-methyltransferase erg6 methylates lanosterol at C-24 to produce eburicol. Eburicol is the substrate of the sterol 14-alpha demethylase encoded by cyp51A and cyp51B, to yield 4,4,24-trimethyl ergosta-8,14,24(28)-trienol. The C-14 reductase erg24 then reduces the C14=C15 double bond which leads to 4,4-dimethylfecosterol. A sequence of further demethylations at C-4, involving the C-4 demethylation complex containing the C-4 methylsterol oxidases erg25A or erg25B, the sterol-4-alpha-carboxylate 3-dehydrogenase erg26 and the 3-keto-steroid reductase erg27, leads to the production of fecosterol via 4-methylfecosterol. The C-8 sterol isomerase erg2 then catalyzes the reaction which results in unsaturation at C-7 in the B ring of sterols and thus converts fecosterol to episterol. The sterol-C5-desaturase erg3B then catalyzes the introduction of a C-5 double bond in the B ring to produce 5-dehydroepisterol. The 2 other sterol-C5-desaturases, erg3A and erg3C, seem to be less important in ergosterol biosynthesis. The C-22 sterol desaturase erg5 further converts 5-dehydroepisterol into ergosta-5,7,22,24(28)-tetraen-3beta-ol by forming the C-22(23) double bond in the sterol side chain. Finally, ergosta-5,7,22,24(28)-tetraen-3beta-ol is substrate of the C-24(28) sterol reductases erg4A and erg4B to produce ergosterol. Possible alternative sterol biosynthetic pathways might exist from fecosterol to ergosterol, depending on the activities of the erg3 isoforms. The chain is Sterol-4-alpha-carboxylate 3-dehydrogenase erg26, decarboxylating from Aspergillus fumigatus (strain ATCC MYA-4609 / CBS 101355 / FGSC A1100 / Af293) (Neosartorya fumigata).